The sequence spans 298 residues: Formylmethanofuran--tetrahydromethanopterin formyltransferase (298 aa).

It belongs to the FTR family. As to quaternary structure, homotetramer.

It localises to the cytoplasm. It catalyses the reaction N-formylmethanofuran + 5,6,7,8-tetrahydromethanopterin + H(+) = N(5)-formyl-5,6,7,8-tetrahydromethanopterin + methanofuran. It participates in one-carbon metabolism; formaldehyde degradation; formate from formaldehyde (H(4)MPT route): step 4/5. Functionally, catalyzes the transfer of a formyl group from 5-formyl tetrahydromethanopterin (5-formyl-H(4)MPT) to methanofuran (MFR) to produce formylmethanofuran (formyl-MFR) and tetrahydromethanopterin (H(4)MPT). The polypeptide is Formylmethanofuran--tetrahydromethanopterin formyltransferase (Methylococcus capsulatus (strain ATCC 33009 / NCIMB 11132 / Bath)).